The following is a 289-amino-acid chain: G1/S-specific cyclin-D2 (289 aa).

The Cyclin N-terminal domain maps to 26–151; the sequence is LQNLLTIEER…VLGKLKWNLA (126 aa). The disordered stretch occupies residues 264-289; it reads QHNAGSKSVEDPDQATTPTDVRDVDL. Phosphoserine is present on Ser-271. At Thr-280 the chain carries Phosphothreonine.

It belongs to the cyclin family. Cyclin D subfamily. In terms of assembly, interacts with either CDK4 or CDK6 protein kinase to form a serine/threonine kinase holoenzyme complex. The cyclin subunit imparts substrate specificity to the complex. In terms of processing, phosphorylation at Thr-280 by MAP kinases is required for ubiquitination and degradation by the DCX(AMBRA1) complex. Post-translationally, ubiquitinated by the DCX(AMBRA1) complex during the transition from G1 to S cell phase, leading to its degradation: ubiquitination is dependent on Thr-280 phosphorylation. The DCX(AMBRA1) complex represents the major regulator of CCND2 stability during the G1/S transition. Polyubiquitinated by the SCF(FBXL2) complex, leading to proteasomal degradation.

It is found in the nucleus. It localises to the cytoplasm. The protein localises to the nucleus membrane. Functionally, regulatory component of the cyclin D2-CDK4 (DC) complex that phosphorylates and inhibits members of the retinoblastoma (RB) protein family including RB1 and regulates the cell-cycle during G(1)/S transition. Phosphorylation of RB1 allows dissociation of the transcription factor E2F from the RB/E2F complex and the subsequent transcription of E2F target genes which are responsible for the progression through the G(1) phase. Hypophosphorylates RB1 in early G(1) phase. Cyclin D-CDK4 complexes are major integrators of various mitogenenic and antimitogenic signals. This chain is G1/S-specific cyclin-D2, found in Mus musculus (Mouse).